The primary structure comprises 687 residues: Glycine--tRNA ligase beta subunit (687 aa).

This sequence belongs to the class-II aminoacyl-tRNA synthetase family. In terms of assembly, tetramer of two alpha and two beta subunits.

The protein resides in the cytoplasm. It catalyses the reaction tRNA(Gly) + glycine + ATP = glycyl-tRNA(Gly) + AMP + diphosphate. The chain is Glycine--tRNA ligase beta subunit from Trichlorobacter lovleyi (strain ATCC BAA-1151 / DSM 17278 / SZ) (Geobacter lovleyi).